Here is a 211-residue protein sequence, read N- to C-terminus: Endo-1,4-beta-xylanase 3 (211 aa).

The N-terminal stretch at 1-27 is a signal peptide; that stretch reads MKVTAAFAGLLVTAFAAPVPEPVLVSR. The 183-residue stretch at 28-210 folds into the GH11 domain; that stretch reads SAGINYVQNY…GAGSASVTIS (183 aa). Glu-106 (nucleophile) is an active-site residue. A disulfide bridge links Cys-119 with Cys-138. The active-site Proton donor is Glu-197.

This sequence belongs to the glycosyl hydrolase 11 (cellulase G) family.

Its subcellular location is the secreted. It catalyses the reaction Endohydrolysis of (1-&gt;4)-beta-D-xylosidic linkages in xylans.. It participates in glycan degradation; xylan degradation. The chain is Endo-1,4-beta-xylanase 3 (xynC) from Aspergillus kawachii (strain NBRC 4308) (White koji mold).